The chain runs to 43 residues: Protein PsbN (43 aa).

Residues 7–24 (VAISISRSLVSFTGYALY) traverse the membrane as a helical segment.

It belongs to the PsbN family.

The protein resides in the plastid. Its subcellular location is the chloroplast thylakoid membrane. Its function is as follows. May play a role in photosystem I and II biogenesis. The polypeptide is Protein PsbN (Ginkgo biloba (Ginkgo)).